The sequence spans 107 residues: Glutaconyl-CoA decarboxylase subunit delta (107 aa).

A helical transmembrane segment spans residues 10-32 (MINMTIVFGVLIVLGILMVLIHA). The tract at residues 37–60 (KKVQGKKKPVVAKPAPSAAASKRQ) is disordered. Positions 47–57 (VAKPAPSAAAS) are enriched in low complexity.

Belongs to the OadG family. As to quaternary structure, heterooctamer consisting of two alpha, two beta, two gamma and two delta subunits.

Its subcellular location is the cell membrane. It carries out the reaction (2E)-glutaconyl-CoA + Na(+)(in) + H(+) = (2E)-butenoyl-CoA + Na(+)(out) + CO2. It functions in the pathway amino-acid degradation; L-glutamate degradation via hydroxyglutarate pathway; crotonoyl-CoA from L-glutamate: step 5/5. Functionally, part of the primary sodium pump glutaconyl-CoA decarboxylase (GCD). Possible membrane anchor for the alpha subunit. This is Glutaconyl-CoA decarboxylase subunit delta (gcdD) from Acidaminococcus fermentans (strain ATCC 25085 / DSM 20731 / CCUG 9996 / CIP 106432 / VR4).